The chain runs to 248 residues: CKLF-like MARVEL transmembrane domain-containing protein 2 (248 aa).

Residues Met-1 to Gly-63 are disordered. Pro residues predominate over residues Glu-12–Ala-22. The span at Lys-23–Gly-63 shows a compositional bias: basic and acidic residues. The MARVEL domain maps to Phe-82–Arg-204. A run of 3 helical transmembrane segments spans residues Leu-116–Ile-136, Ile-147–Ala-167, and Tyr-178–Leu-198. Residues Ala-208–Lys-248 are disordered. Positions Pro-231 to Lys-248 are enriched in pro residues.

Belongs to the chemokine-like factor family. Highly expressed in testis.

The protein resides in the membrane. This chain is CKLF-like MARVEL transmembrane domain-containing protein 2 (CMTM2), found in Homo sapiens (Human).